A 213-amino-acid chain; its full sequence is Putative cytochrome c-type biogenesis protein HI_1454 (213 aa).

Helical transmembrane passes span 15–35, 46–66, 77–97, 118–138, 154–174, and 192–212; these read GLASFLSPCIFPIIPIYFGIL, FLFILGLSLTFVSLGFSFGFL, IIAGVIVIILGIHQLGIFKIG, AFVLGLTFSLGWTPCIGPILA, ASMMFVYVLGLATPFVLFSFF, and FKIGGGILIIVMGILLITNNF.

Belongs to the DsbD family.

The protein resides in the cell membrane. Could be involved in cytochrome c synthesis. In Haemophilus influenzae (strain ATCC 51907 / DSM 11121 / KW20 / Rd), this protein is Putative cytochrome c-type biogenesis protein HI_1454.